The chain runs to 207 residues: 3-demethoxyubiquinol 3-hydroxylase (207 aa).

The Fe cation site is built by E56, E86, H89, E138, E170, and H173.

This sequence belongs to the COQ7 family. Requires Fe cation as cofactor.

It is found in the cell membrane. The enzyme catalyses a 5-methoxy-2-methyl-3-(all-trans-polyprenyl)benzene-1,4-diol + AH2 + O2 = a 3-demethylubiquinol + A + H2O. It functions in the pathway cofactor biosynthesis; ubiquinone biosynthesis. Its function is as follows. Catalyzes the hydroxylation of 2-nonaprenyl-3-methyl-6-methoxy-1,4-benzoquinol during ubiquinone biosynthesis. The chain is 3-demethoxyubiquinol 3-hydroxylase from Cupriavidus taiwanensis (strain DSM 17343 / BCRC 17206 / CCUG 44338 / CIP 107171 / LMG 19424 / R1) (Ralstonia taiwanensis (strain LMG 19424)).